The sequence spans 689 residues: DNA ligase (689 aa).

Residues 40–44 (DSEYD), 89–90 (SL), and E121 contribute to the NAD(+) site. The active-site N6-AMP-lysine intermediate is the K123. NAD(+) is bound by residues R144, E179, K295, and K319. Zn(2+)-binding residues include C413, C416, C431, and C437. The region spanning 610–689 (REQNILTGKI…VEWLAFIKNA (80 aa)) is the BRCT domain.

The protein belongs to the NAD-dependent DNA ligase family. LigA subfamily. It depends on Mg(2+) as a cofactor. Mn(2+) is required as a cofactor.

It catalyses the reaction NAD(+) + (deoxyribonucleotide)n-3'-hydroxyl + 5'-phospho-(deoxyribonucleotide)m = (deoxyribonucleotide)n+m + AMP + beta-nicotinamide D-nucleotide.. In terms of biological role, DNA ligase that catalyzes the formation of phosphodiester linkages between 5'-phosphoryl and 3'-hydroxyl groups in double-stranded DNA using NAD as a coenzyme and as the energy source for the reaction. It is essential for DNA replication and repair of damaged DNA. The sequence is that of DNA ligase from Rickettsia prowazekii (strain Madrid E).